A 103-amino-acid chain; its full sequence is Small ribosomal subunit protein uS10 (103 aa).

The protein belongs to the universal ribosomal protein uS10 family. As to quaternary structure, part of the 30S ribosomal subunit.

Its function is as follows. Involved in the binding of tRNA to the ribosomes. This chain is Small ribosomal subunit protein uS10, found in Neorickettsia sennetsu (strain ATCC VR-367 / Miyayama) (Ehrlichia sennetsu).